The primary structure comprises 540 residues: DNA-(apurinic or apyrimidinic site) endonuclease (540 aa).

2 residues coordinate Mg(2+): N206 and E239. A disordered region spans residues 256–276 (NNKVYGGKKNEGEERNRGSVK). The span at 263-276 (KKNEGEERNRGSVK) shows a compositional bias: basic and acidic residues. Positions 400, 402, 530, and 531 each coordinate Mg(2+). Residue H531 is the Proton acceptor of the active site.

Belongs to the DNA repair enzymes AP/ExoA family. Mg(2+) serves as cofactor. Requires Mn(2+) as cofactor. May be proteolytically cleaved.

It is found in the mitochondrion. The catalysed reaction is Exonucleolytic cleavage in the 3'- to 5'-direction to yield nucleoside 5'-phosphates.. In terms of biological role, multifunctional protein that plays a central role in mitochondrial DNA base excision repair pathway induced by oxidative stress. Has apurinic/apyrimidinic (AP) endonuclease activity towards double-stranded DNA (dsDNA). Has nucleotide incision repair (NIR) activity; acts on dsDNA with oxidized bases thymine glycol and 5,6-dihydro-2'-deoxyuridine. Has 3'-5' exonuclease; can use dsDNA templates with 3'-OH termini including blunt-end, gapped and mismatched 3'-recessed. Has 3'-phosphatase activity; cleaves 3'-phosphate from blunt, recessed and gapped dsDNA templates, followed by 3'-5' exonuclease activity. Has RNase H-like activity; cleaves RNA on 3'-recessed RNA-DNA duplex. Plays a role in merosome infection of host erythrocytes. This chain is DNA-(apurinic or apyrimidinic site) endonuclease, found in Plasmodium berghei (strain Anka).